Here is a 495-residue protein sequence, read N- to C-terminus: Serine/threonine protein phosphatase 2A 57 kDa regulatory subunit B' alpha isoform (495 aa).

A compositionally biased stretch (basic residues) spans Met1–Ala13. Disordered regions lie at residues Met1 to Thr61 and Gln462 to Ser495. Polar residues predominate over residues Val49 to Thr61.

This sequence belongs to the phosphatase 2A regulatory subunit B56 family. PP2A consists of a common heteromeric enzyme, composed of a catalytic subunit (subunits C), a constant regulatory subunit (subunit A), and a variety of regulatory subunits such as subunits B (the R2/B/PR55/B55, R3/B''/PR72/PR130/PR59 and R5/B'/B56 families). Interacts with BZR1. Interacts with BRI1. Interacts with SRK2E/OST1. In terms of tissue distribution, expressed ubiquitously, higher levels in leaves.

The protein localises to the nucleus. It localises to the cytoplasm. The B regulatory subunit may modulate substrate selectivity and catalytic activity, and may also direct the localization of the catalytic enzyme to a particular subcellular compartment. Required for the formation of the PP2A holoenzyme that positively regulates brassinosteroid signaling by dephosphorylating and activating BZR1. The chain is Serine/threonine protein phosphatase 2A 57 kDa regulatory subunit B' alpha isoform (B'ALPHA) from Arabidopsis thaliana (Mouse-ear cress).